The following is a 1059-amino-acid chain: Potassium transporter TRK1 (1059 aa).

The Cytoplasmic portion of the chain corresponds to 1–46 (MLYRVSGFYKRHTRNFTNIDYGYYIRNFIHHIASKIYPYAKVVLPN). Residues 47 to 67 (FRAAHYFYILTLVILGSILVY) form a helical membrane-spanning segment. Topologically, residues 68–73 (PVKTCA) are extracellular. An intramembrane segment occupies 74–90 (YIDVLFFTAGASTQAGL). Residues 91–99 (NTVNVNDLS) are Extracellular-facing. A helical membrane pass occupies residues 100-122 (LYQQIVLYLLATLATPIFIHGSL). Topologically, residues 123–625 (LFVRLYYFER…LGGIEYRAVK (503 aa)) are cytoplasmic. Disordered regions lie at residues 180–276 (REAE…IDPE), 304–350 (IGSP…EDED), and 404–574 (PWTS…SIEN). Positions 186-203 (SSSSPQSSSSQTSQPVST) are enriched in low complexity. Residues 236–245 (EKIHFEEPQR) are compositionally biased toward basic and acidic residues. Residues 335 to 344 (PATNSVGTGN) show a composition bias toward polar residues. Residues 412-423 (TLSNSSKKGSLS) show a composition bias toward low complexity. 2 stretches are compositionally biased toward acidic residues: residues 428 to 449 (DTED…SDIS) and 469 to 490 (YEED…DDGE). A compositionally biased stretch (polar residues) spans 524 to 536 (RSNTLDTPQQNTS). The segment covering 540 to 552 (KIRKKAPKRKTPR) has biased composition (basic residues). The segment covering 556–566 (NASFNQHSNVS) has biased composition (polar residues). The helical transmembrane segment at 626 to 649 (LLIKIIVVYYVGFNIIPGVMLSIW) threads the bilayer. Over 650-668 (IYCMPHYKNLMISSSISPA) the chain is Extracellular. The stretch at 669–685 (WWAFFTSQSSFNDLGLT) is an intramembrane region. Over 686–696 (LTSNSMMSFNQ) the chain is Extracellular. The chain crosses the membrane as a helical span at residues 697-713 (NAFVQILCSFLIVIGNT). Topologically, residues 714–757 (GFPILLRFIIWVMFKTARPLSLYKESLGFLLDHPRRCFTLLFPS) are cytoplasmic. Residues 758 to 781 (VPTWWLFFILVVLNGFDLVIFCIL) form a helical membrane-spanning segment. The Extracellular portion of the chain corresponds to 782–796 (DLHDDTFKGVDMGYR). An intramembrane segment occupies 797–813 (VLNGLFQAFCTRTVGFS). Residues 814 to 820 (VMDLSQL) are Extracellular-facing. The chain crosses the membrane as a helical span at residues 821–844 (HAATQVSYLIMMYISVLPIAISVR). Residues 845-877 (RTNVYEEQSLGVYAKENAEGVDESAPSNYVGSH) are Cytoplasmic-facing. The chain crosses the membrane as a helical span at residues 878–899 (LRNQLSYDLWYICLGLFIICIA). Topologically, residues 900-912 (EGKRLKEQDLRFS) are extracellular. An intramembrane segment occupies 913–931 (IFAVLFEIVSAYGTVGMSM). Over 932 to 945 (GYPGVDCSLSGEFN) the chain is Extracellular. The helical transmembrane segment at 946-968 (VISKLVIIAMMIRGRHRGLPYTI) threads the bilayer. Topologically, residues 969-1059 (DRAIMLPNAA…RYVVRTVSEV (91 aa)) are cytoplasmic.

Belongs to the TrkH potassium transport family.

The protein localises to the cell membrane. It carries out the reaction K(+)(in) = K(+)(out). The enzyme catalyses chloride(in) = chloride(out). TRK1-mediated chloride conductance is blocked by 4,4'-diisothiocyanatostilbene-2,2'-disulfonic acid. Its function is as follows. Potassium transporter that mediates K(+) influx, as well as Cl(-) efflux as a secondary function. TRK1 is the major K(+) uptake transporter that regulates membrane potential and intracellular pH. The TRK1-mediated Cl(-) efflux should serve as a Cl(-) detoxification route and may play a role in sustaining C.albicans on mammalian epithelial surfaces, or in physiological saline solutions such as saliva. Functionally, mediates candidacidal activities of cysteine-free peptides, but not of defensins. The hallmark of salivary gland-secreted histatin-5 (Hst 5) killing of C.albicans is the rapid efflux of cellular ATP and other small nucleotides and ions from the cell as well as concurrent intracellular uptake of propidium iodide (PI). TRK1 is the channel for Hst 5-induced killing and histatin-5 may directly or indirectly alter TRK1 function, allowing the efflux of larger anions, including ATP, and the influx of small cationic dyes, such as PI. In Candida albicans (Yeast), this protein is Potassium transporter TRK1.